We begin with the raw amino-acid sequence, 166 residues long: Ribosome maturation factor RimM (166 aa).

Residues D91–L165 enclose the PRC barrel domain.

Belongs to the RimM family. In terms of assembly, binds ribosomal protein uS19.

It localises to the cytoplasm. Its function is as follows. An accessory protein needed during the final step in the assembly of 30S ribosomal subunit, possibly for assembly of the head region. Essential for efficient processing of 16S rRNA. May be needed both before and after RbfA during the maturation of 16S rRNA. It has affinity for free ribosomal 30S subunits but not for 70S ribosomes. The sequence is that of Ribosome maturation factor RimM from Dinoroseobacter shibae (strain DSM 16493 / NCIMB 14021 / DFL 12).